The primary structure comprises 434 residues: Enolase (434 aa).

Gln165 contributes to the (2R)-2-phosphoglycerate binding site. Residue Glu207 is the Proton donor of the active site. 3 residues coordinate Mg(2+): Asp244, Glu291, and Asp318. Positions 343, 372, 373, and 394 each coordinate (2R)-2-phosphoglycerate. Lys343 serves as the catalytic Proton acceptor.

Belongs to the enolase family. The cofactor is Mg(2+).

Its subcellular location is the cytoplasm. The protein localises to the secreted. The protein resides in the cell surface. It catalyses the reaction (2R)-2-phosphoglycerate = phosphoenolpyruvate + H2O. It participates in carbohydrate degradation; glycolysis; pyruvate from D-glyceraldehyde 3-phosphate: step 4/5. Catalyzes the reversible conversion of 2-phosphoglycerate (2-PG) into phosphoenolpyruvate (PEP). It is essential for the degradation of carbohydrates via glycolysis. The protein is Enolase of Staphylococcus aureus (strain USA300 / TCH1516).